The sequence spans 241 residues: uncharacterized protein (241 aa).

Residues 84-216 (TVVSLVVCDL…APGPVVAGRD (133 aa)) form the GGDEF domain. The disordered stretch occupies residues 215–241 (RDGEVVRLADSPPKSAHDRRRLRGNRP). Over residues 231–241 (HDRRRLRGNRP) the composition is skewed to basic residues.

This is an uncharacterized protein from Streptomyces griseus.